Reading from the N-terminus, the 381-residue chain is Succinyl-diaminopimelate desuccinylase 1 (381 aa).

Histidine 70 lines the Zn(2+) pocket. Aspartate 72 is a catalytic residue. Aspartate 103 serves as a coordination point for Zn(2+). The active-site Proton acceptor is the glutamate 136. 3 residues coordinate Zn(2+): glutamate 137, glutamate 165, and histidine 354.

It belongs to the peptidase M20A family. DapE subfamily. In terms of assembly, homodimer. Requires Zn(2+) as cofactor. The cofactor is Co(2+).

It catalyses the reaction N-succinyl-(2S,6S)-2,6-diaminopimelate + H2O = (2S,6S)-2,6-diaminopimelate + succinate. Its pathway is amino-acid biosynthesis; L-lysine biosynthesis via DAP pathway; LL-2,6-diaminopimelate from (S)-tetrahydrodipicolinate (succinylase route): step 3/3. In terms of biological role, catalyzes the hydrolysis of N-succinyl-L,L-diaminopimelic acid (SDAP), forming succinate and LL-2,6-diaminopimelate (DAP), an intermediate involved in the bacterial biosynthesis of lysine and meso-diaminopimelic acid, an essential component of bacterial cell walls. This is Succinyl-diaminopimelate desuccinylase 1 from Ruegeria sp. (strain TM1040) (Silicibacter sp.).